Consider the following 149-residue polypeptide: Large ribosomal subunit protein bL9 (149 aa).

This sequence belongs to the bacterial ribosomal protein bL9 family.

Its function is as follows. Binds to the 23S rRNA. The polypeptide is Large ribosomal subunit protein bL9 (Thermotoga sp. (strain RQ2)).